The sequence spans 491 residues: Cytochrome P450 2K3 (491 aa).

Cysteine 434 is a heme binding site.

The protein belongs to the cytochrome P450 family. Heme serves as cofactor.

The protein resides in the endoplasmic reticulum membrane. The protein localises to the microsome membrane. The enzyme catalyses an organic molecule + reduced [NADPH--hemoprotein reductase] + O2 = an alcohol + oxidized [NADPH--hemoprotein reductase] + H2O + H(+). This is Cytochrome P450 2K3 (cyp2k3) from Oncorhynchus mykiss (Rainbow trout).